A 206-amino-acid chain; its full sequence is Thiamine-phosphate synthase (206 aa).

Residues 36-40 and Asn68 each bind 4-amino-2-methyl-5-(diphosphooxymethyl)pyrimidine; that span reads QLRMK. Mg(2+)-binding residues include Asp69 and Asp88. Ser106 is a binding site for 4-amino-2-methyl-5-(diphosphooxymethyl)pyrimidine. 132-134 is a 2-[(2R,5Z)-2-carboxy-4-methylthiazol-5(2H)-ylidene]ethyl phosphate binding site; sequence TNT. A 4-amino-2-methyl-5-(diphosphooxymethyl)pyrimidine-binding site is contributed by Lys135. Residues Gly162 and 182-183 contribute to the 2-[(2R,5Z)-2-carboxy-4-methylthiazol-5(2H)-ylidene]ethyl phosphate site; that span reads VS.

The protein belongs to the thiamine-phosphate synthase family. Mg(2+) serves as cofactor.

The enzyme catalyses 2-[(2R,5Z)-2-carboxy-4-methylthiazol-5(2H)-ylidene]ethyl phosphate + 4-amino-2-methyl-5-(diphosphooxymethyl)pyrimidine + 2 H(+) = thiamine phosphate + CO2 + diphosphate. It carries out the reaction 2-(2-carboxy-4-methylthiazol-5-yl)ethyl phosphate + 4-amino-2-methyl-5-(diphosphooxymethyl)pyrimidine + 2 H(+) = thiamine phosphate + CO2 + diphosphate. It catalyses the reaction 4-methyl-5-(2-phosphooxyethyl)-thiazole + 4-amino-2-methyl-5-(diphosphooxymethyl)pyrimidine + H(+) = thiamine phosphate + diphosphate. The protein operates within cofactor biosynthesis; thiamine diphosphate biosynthesis; thiamine phosphate from 4-amino-2-methyl-5-diphosphomethylpyrimidine and 4-methyl-5-(2-phosphoethyl)-thiazole: step 1/1. In terms of biological role, condenses 4-methyl-5-(beta-hydroxyethyl)thiazole monophosphate (THZ-P) and 2-methyl-4-amino-5-hydroxymethyl pyrimidine pyrophosphate (HMP-PP) to form thiamine monophosphate (TMP). The sequence is that of Thiamine-phosphate synthase from Methanococcus vannielii (strain ATCC 35089 / DSM 1224 / JCM 13029 / OCM 148 / SB).